The sequence spans 695 residues: Lupanine 17-hydroxylase [cytochrome c] (695 aa).

The signal sequence occupies residues 1–26 (MSANKNIWIIRLGVAFVCVAIGAAQA). A Cytochrome c domain is found at 598-677 (AMAESGRHIF…ALQAFILQKA (80 aa)). Heme c is bound by residues Cys-612, Cys-615, and His-616.

It belongs to the bacterial PQQ dehydrogenase family. In terms of assembly, monomer. Requires pyrroloquinoline quinone as cofactor. Heme c is required as a cofactor.

Its subcellular location is the periplasm. It carries out the reaction lupanine + 2 Fe(III)-[cytochrome c] + H2O = 17-hydroxylupanine + 2 Fe(II)-[cytochrome c] + 2 H(+). Functionally, catalyzes the first reaction in the catabolism of the alkaloid lupanine. It dehydrogenates lupanine, which can then be hydrated to produce 17-hydroxylupanine. This Pseudomonas sp protein is Lupanine 17-hydroxylase [cytochrome c] (luh).